We begin with the raw amino-acid sequence, 223 residues long: Probable Brix domain-containing ribosomal biogenesis protein (223 aa).

The region spanning 1–196 is the Brix domain; it reads MMLITTSHRP…IWIMEDGRRW (196 aa).

Probably involved in the biogenesis of the ribosome. The chain is Probable Brix domain-containing ribosomal biogenesis protein from Pyrococcus furiosus (strain ATCC 43587 / DSM 3638 / JCM 8422 / Vc1).